Consider the following 92-residue polypeptide: Large ribosomal subunit protein eL43 (92 aa).

Residues 39-60 form a C4-type zinc finger; it reads CSFCGKKAVKRGAAGIWNCSSC.

This sequence belongs to the eukaryotic ribosomal protein eL43 family.

This is Large ribosomal subunit protein eL43 (RPL43) from Eremothecium gossypii (strain ATCC 10895 / CBS 109.51 / FGSC 9923 / NRRL Y-1056) (Yeast).